A 61-amino-acid chain; its full sequence is Chi-conotoxin MrIA (61 aa).

Positions 1-19 are cleaved as a signal peptide; that stretch reads MRCLPVLIILLLLTASAPG. Residues 20–48 constitute a propeptide that is removed on maturation; the sequence is VVVLPKTEDDVPMSSVYGNGKSILRGILR. Disulfide bonds link C52–C61 and C53–C58. P60 carries the 4-hydroxyproline modification.

The protein belongs to the conotoxin T superfamily. Expressed by the venom duct.

Its subcellular location is the secreted. Its function is as follows. Chi-conotoxins inhibit the neuronal noradrenaline transporter (NET/SLC6A2). Activity has been described on both human (inhibition of norepinephrine uptake is IC(50)=1.26 uM) and rat (pIC(50)=6.21 corresponding IC(50)=0.16 uM) transporters. Acts as a reversible non-competitive inhibitor. The polypeptide is Chi-conotoxin MrIA (Conus marmoreus (Marble cone)).